A 567-amino-acid chain; its full sequence is Nucleolus and neural progenitor protein (567 aa).

Position 265 is a phosphoserine (Ser265). The tract at residues 437 to 457 is disordered; the sequence is SKHHLRQRRSQNKFLRRQRKP. The interval 442-460 is nuclear localization signal; that stretch reads RQRRSQNKFLRRQRKPQRK.

It belongs to the nepro family.

It localises to the nucleus. Its subcellular location is the nucleolus. Its function is as follows. May play a role in cortex development as part of the Notch signaling pathway. Downstream of Notch may repress the expression of proneural genes and inhibit neuronal differentiation thereby maintaining neural progenitors. May also play a role in preimplentation embryo development. The protein is Nucleolus and neural progenitor protein of Homo sapiens (Human).